The chain runs to 222 residues: 7-cyano-7-deazaguanine synthase (222 aa).

ATP is bound at residue 11-21; sequence FSGGQDSTTCL. 4 residues coordinate Zn(2+): C187, C195, C198, and C201.

The protein belongs to the QueC family. It depends on Zn(2+) as a cofactor.

It catalyses the reaction 7-carboxy-7-deazaguanine + NH4(+) + ATP = 7-cyano-7-deazaguanine + ADP + phosphate + H2O + H(+). It functions in the pathway purine metabolism; 7-cyano-7-deazaguanine biosynthesis. Functionally, catalyzes the ATP-dependent conversion of 7-carboxy-7-deazaguanine (CDG) to 7-cyano-7-deazaguanine (preQ(0)). The chain is 7-cyano-7-deazaguanine synthase from Actinobacillus pleuropneumoniae serotype 3 (strain JL03).